The primary structure comprises 339 residues: 3-isopropylmalate dehydrogenase (339 aa).

Substrate is bound by residues R87, R97, R124, and D214. Residues D214, D238, and D242 each contribute to the Mg(2+) site. 274–286 (GSAPDIAGQGIAD) lines the NAD(+) pocket.

This sequence belongs to the isocitrate and isopropylmalate dehydrogenases family. LeuB type 2 subfamily. In terms of assembly, homodimer. It depends on Mg(2+) as a cofactor. The cofactor is Mn(2+).

It is found in the cytoplasm. The enzyme catalyses (2R,3S)-3-isopropylmalate + NAD(+) = 4-methyl-2-oxopentanoate + CO2 + NADH. The protein operates within amino-acid biosynthesis; L-leucine biosynthesis; L-leucine from 3-methyl-2-oxobutanoate: step 3/4. Catalyzes the oxidation of 3-carboxy-2-hydroxy-4-methylpentanoate (3-isopropylmalate) to 3-carboxy-4-methyl-2-oxopentanoate. The product decarboxylates to 4-methyl-2 oxopentanoate. This chain is 3-isopropylmalate dehydrogenase, found in Mycobacterium marinum (strain ATCC BAA-535 / M).